Reading from the N-terminus, the 233-residue chain is Glycerol-3-phosphate acyltransferase (233 aa).

Transmembrane regions (helical) follow at residues 7-27, 94-114, 127-147, 153-173, and 185-205; these read WIII…GYII, ISIV…YIGF, VIAI…IVAF, SIGS…GVLI, and ISYE…LLII.

It belongs to the PlsY family. As to quaternary structure, probably interacts with PlsX.

It is found in the cell membrane. It carries out the reaction an acyl phosphate + sn-glycerol 3-phosphate = a 1-acyl-sn-glycero-3-phosphate + phosphate. The protein operates within lipid metabolism; phospholipid metabolism. In terms of biological role, catalyzes the transfer of an acyl group from acyl-phosphate (acyl-PO(4)) to glycerol-3-phosphate (G3P) to form lysophosphatidic acid (LPA). This enzyme utilizes acyl-phosphate as fatty acyl donor, but not acyl-CoA or acyl-ACP. The sequence is that of Glycerol-3-phosphate acyltransferase from Acholeplasma laidlawii.